A 429-amino-acid chain; its full sequence is Fc receptor-like protein 1 (429 aa).

An N-terminal signal peptide occupies residues 1–16; that stretch reads MLPRLLLLICAPLCEP. Ig-like C2-type domains are found at residues 17–104, 109–200, and 208–291; these read AELF…SQIN, PVAD…VSIT, and PILM…EAVT. Topologically, residues 17–307 are extracellular; sequence AELFLIASPS…TGARSNHLTS (291 aa). 3 cysteine pairs are disulfide-bonded: C38/C86, C134/C183, and C229/C276. A glycan (N-linked (GlcNAc...) asparagine) is linked at N293. The helical transmembrane segment at 308–328 threads the bilayer; that stretch reads GVIEGLLSTLGPATVALLFCY. The Cytoplasmic portion of the chain corresponds to 329 to 429; it reads GLKRKIGRRS…ITDVDYEDAM (101 aa). Short sequence motifs (ITIM motif) lie at residues 354–359, 367–372, 379–384, 410–415, and 423–428; these read FTYLNS, PIYENV, EVYSLA, DIYSRL, and VDYEDA.

Interacts with ABL1. Interacts with GRB2 and SOS1. Interacts with SHIP-1/INPP5D. Post-translationally, phosphorylated on tyrosines upon activation. In terms of tissue distribution, primarily expressed in secondary lymphoid tissues by mature subsets of B-cells. Detected in spleen, lymph node, heart, skeletal muscle, kidney, liver and placenta. Specifically expressed by mature B lineage cells with higher expression in naive versus memory B-cells (at protein level).

Its subcellular location is the cell membrane. Functionally, type I transmembrane surface glycoprotein preferentially expressed by B-cells that regulates BCR-mediated signaling responses. Recruits ABL1 as the intracellular effector molecule to enhance B-cell activation. Also plays a negative role by suppressing ERK activation under homeostatic and BCR-stimulated conditions in a GRB2-dependent manner. This Homo sapiens (Human) protein is Fc receptor-like protein 1 (FCRL1).